Here is a 190-residue protein sequence, read N- to C-terminus: Pyridoxal 5'-phosphate synthase subunit PdxT (190 aa).

46-48 (GES) lines the L-glutamine pocket. Cys-78 (nucleophile) is an active-site residue. Residues Arg-108 and 137–138 (IR) contribute to the L-glutamine site. Catalysis depends on charge relay system residues His-174 and Glu-176.

Belongs to the glutaminase PdxT/SNO family. As to quaternary structure, in the presence of PdxS, forms a dodecamer of heterodimers. Only shows activity in the heterodimer.

It carries out the reaction aldehydo-D-ribose 5-phosphate + D-glyceraldehyde 3-phosphate + L-glutamine = pyridoxal 5'-phosphate + L-glutamate + phosphate + 3 H2O + H(+). The enzyme catalyses L-glutamine + H2O = L-glutamate + NH4(+). Its pathway is cofactor biosynthesis; pyridoxal 5'-phosphate biosynthesis. Functionally, catalyzes the hydrolysis of glutamine to glutamate and ammonia as part of the biosynthesis of pyridoxal 5'-phosphate. The resulting ammonia molecule is channeled to the active site of PdxS. The sequence is that of Pyridoxal 5'-phosphate synthase subunit PdxT from Chloroflexus aurantiacus (strain ATCC 29366 / DSM 635 / J-10-fl).